The primary structure comprises 326 residues: Aspartate carbamoyltransferase catalytic subunit (326 aa).

Carbamoyl phosphate is bound by residues R58 and T59. K86 serves as a coordination point for L-aspartate. Carbamoyl phosphate-binding residues include R108, H141, and Q144. Residues R181 and R239 each contribute to the L-aspartate site. 2 residues coordinate carbamoyl phosphate: G280 and P281.

This sequence belongs to the aspartate/ornithine carbamoyltransferase superfamily. ATCase family. As to quaternary structure, heterododecamer (2C3:3R2) of six catalytic PyrB chains organized as two trimers (C3), and six regulatory PyrI chains organized as three dimers (R2).

It catalyses the reaction carbamoyl phosphate + L-aspartate = N-carbamoyl-L-aspartate + phosphate + H(+). It functions in the pathway pyrimidine metabolism; UMP biosynthesis via de novo pathway; (S)-dihydroorotate from bicarbonate: step 2/3. Catalyzes the condensation of carbamoyl phosphate and aspartate to form carbamoyl aspartate and inorganic phosphate, the committed step in the de novo pyrimidine nucleotide biosynthesis pathway. The polypeptide is Aspartate carbamoyltransferase catalytic subunit (Synechococcus sp. (strain JA-3-3Ab) (Cyanobacteria bacterium Yellowstone A-Prime)).